A 413-amino-acid chain; its full sequence is Dual-specificity RNA methyltransferase RlmN (413 aa).

Glutamate 126 (proton acceptor) is an active-site residue. One can recognise a Radical SAM core domain in the interval 132-381 (EEGRGTLCIS…IRTPRGRDIL (250 aa)). An intrachain disulfide couples cysteine 139 to cysteine 384. Residues cysteine 146, cysteine 150, and cysteine 153 each coordinate [4Fe-4S] cluster. S-adenosyl-L-methionine-binding positions include 210–211 (GE), serine 242, 264–266 (SLH), and asparagine 341. Cysteine 384 serves as the catalytic S-methylcysteine intermediate.

The protein belongs to the radical SAM superfamily. RlmN family. [4Fe-4S] cluster is required as a cofactor.

Its subcellular location is the cytoplasm. It catalyses the reaction adenosine(2503) in 23S rRNA + 2 reduced [2Fe-2S]-[ferredoxin] + 2 S-adenosyl-L-methionine = 2-methyladenosine(2503) in 23S rRNA + 5'-deoxyadenosine + L-methionine + 2 oxidized [2Fe-2S]-[ferredoxin] + S-adenosyl-L-homocysteine. It carries out the reaction adenosine(37) in tRNA + 2 reduced [2Fe-2S]-[ferredoxin] + 2 S-adenosyl-L-methionine = 2-methyladenosine(37) in tRNA + 5'-deoxyadenosine + L-methionine + 2 oxidized [2Fe-2S]-[ferredoxin] + S-adenosyl-L-homocysteine. Its function is as follows. Specifically methylates position 2 of adenine 2503 in 23S rRNA and position 2 of adenine 37 in tRNAs. m2A2503 modification seems to play a crucial role in the proofreading step occurring at the peptidyl transferase center and thus would serve to optimize ribosomal fidelity. The sequence is that of Dual-specificity RNA methyltransferase RlmN from Sinorhizobium medicae (strain WSM419) (Ensifer medicae).